A 28-amino-acid polypeptide reads, in one-letter code: Ornatin-D (28 aa).

The protein belongs to the ornatin family.

The protein resides in the secreted. Functionally, potent inhibitor of fibrinogen interaction with platelet receptors expressed on glycoprotein IIb-IIIa complex. May prevent blood from clotting during either feeding and/or storage of ingested blood. The protein is Ornatin-D of Placobdella ornata (Turtle leech).